The primary structure comprises 458 residues: Nuclear transcription factor Y subunit gamma (458 aa).

Positions 305-315 (QQQFSQFTDGQ) are enriched in low complexity. The segment at 305–379 (QQQFSQFTDG…QQSSTSPPPS (75 aa)) is disordered. Positions 339 to 351 (TGNSTPCTSSLPT) are enriched in polar residues.

Belongs to the NFYC/HAP5 subunit family. Heterotrimeric transcription factor composed of three components, NF-YA, NF-YB and NF-YC. NF-YB and NF-YC must interact and dimerize for NF-YA association and DNA binding.

It is found in the nucleus. Its function is as follows. Component of the sequence-specific heterotrimeric transcription factor (NF-Y) which specifically recognizes a 5'-CCAAT-3' box motif found in the promoters of its target genes. NF-Y can function as both an activator and a repressor, depending on its interacting cofactors. This is Nuclear transcription factor Y subunit gamma (NFYC) from Homo sapiens (Human).